The following is a 228-amino-acid chain: Cytochrome b5 domain-containing protein 1 (228 aa).

The Cytochrome b5 heme-binding domain occupies 17-83; that stretch reads RRYFTPSEVA…DPQTRDIRKH (67 aa). His83 is a binding site for heme.

This sequence belongs to the cytochrome b5 family.

It is found in the cytoplasm. The protein resides in the cytoskeleton. The protein localises to the cilium axoneme. In terms of biological role, radial spoke stalk protein that binds heme under oxidizing conditions. Required for the coordinated beating of multiple cilia maybe by functioning in a redox signaling pathway. In Mus musculus (Mouse), this protein is Cytochrome b5 domain-containing protein 1 (Cyb5d1).